A 604-amino-acid polypeptide reads, in one-letter code: Aspartate--tRNA(Asp/Asn) ligase (604 aa).

Glu169 is a binding site for L-aspartate. Residues 193-196 (QLFK) form an aspartate region. Residue Arg215 participates in L-aspartate binding. ATP is bound by residues 215–217 (RDE) and Gln224. L-aspartate is bound at residue His456. ATP is bound at residue Glu490. Arg497 contacts L-aspartate. Residue 542-545 (GWDR) participates in ATP binding. The interval 571 to 604 (PLTGAPAPITAQQRKEAGVDAQPEPKQAEAEPEA) is disordered.

It belongs to the class-II aminoacyl-tRNA synthetase family. Type 1 subfamily. In terms of assembly, homodimer.

The protein resides in the cytoplasm. It catalyses the reaction tRNA(Asx) + L-aspartate + ATP = L-aspartyl-tRNA(Asx) + AMP + diphosphate. Its function is as follows. Aspartyl-tRNA synthetase with relaxed tRNA specificity since it is able to aspartylate not only its cognate tRNA(Asp) but also tRNA(Asn). Reaction proceeds in two steps: L-aspartate is first activated by ATP to form Asp-AMP and then transferred to the acceptor end of tRNA(Asp/Asn). This is Aspartate--tRNA(Asp/Asn) ligase from Micrococcus luteus (strain ATCC 4698 / DSM 20030 / JCM 1464 / CCM 169 / CCUG 5858 / IAM 1056 / NBRC 3333 / NCIMB 9278 / NCTC 2665 / VKM Ac-2230) (Micrococcus lysodeikticus).